Consider the following 145-residue polypeptide: Basic phospholipase A2 cL037 (145 aa).

An N-terminal signal peptide occupies residues 1-21 (MYPAHLLVLLAVCVSLLGASA). Positions 22-27 (ILPLPL) are excised as a propeptide. 7 disulfide bridges follow: Cys38–Cys98, Cys54–Cys144, Cys56–Cys72, Cys71–Cys125, Cys78–Cys118, Cys87–Cys111, and Cys105–Cys116. The Ca(2+) site is built by Tyr55, Gly57, and Gly59. His75 is a catalytic residue. Asp76 serves as a coordination point for Ca(2+). Asp119 is a catalytic residue.

Belongs to the phospholipase A2 family. Group I subfamily. D49 sub-subfamily. It depends on Ca(2+) as a cofactor. As to expression, expressed by the venom gland.

It localises to the secreted. It catalyses the reaction a 1,2-diacyl-sn-glycero-3-phosphocholine + H2O = a 1-acyl-sn-glycero-3-phosphocholine + a fatty acid + H(+). Functionally, PLA2 catalyzes the calcium-dependent hydrolysis of the 2-acyl groups in 3-sn-phosphoglycerides. This is Basic phospholipase A2 cL037 from Laticauda semifasciata (Black-banded sea krait).